A 103-amino-acid polypeptide reads, in one-letter code: MLTKITFFERFEQDILSGAKTITLRDEAESHVFAGQILPVSTFEDDRWFCDIEVIEVVPVLFSELTEQHAAQENMTLPELRRVIQEIYPGLEQLFQIRFCLVQ.

An ASCH domain is found at 6 to 92; that stretch reads TFFERFEQDI…VIQEIYPGLE (87 aa). Lys-20 serves as the catalytic Proton acceptor. Thr-23 (nucleophile) is an active-site residue. Glu-73 acts as the Proton donor in catalysis.

The protein belongs to the N(4)-acetylcytidine amidohydrolase family.

The catalysed reaction is N(4)-acetylcytidine + H2O = cytidine + acetate + H(+). It carries out the reaction N(4)-acetyl-2'-deoxycytidine + H2O = 2'-deoxycytidine + acetate + H(+). It catalyses the reaction N(4)-acetylcytosine + H2O = cytosine + acetate + H(+). In terms of biological role, catalyzes the hydrolysis of N(4)-acetylcytidine (ac4C). The sequence is that of N(4)-acetylcytidine amidohydrolase from Shewanella sp. (strain MR-4).